Here is a 63-residue protein sequence, read N- to C-terminus: Large ribosomal subunit protein uL30 (63 aa).

The protein belongs to the universal ribosomal protein uL30 family. Part of the 50S ribosomal subunit.

The protein is Large ribosomal subunit protein uL30 of Xanthomonas axonopodis pv. citri (strain 306).